The sequence spans 477 residues: MTPTNVKTRFAPSPTGRMHLGNLRTALFNALLARSRGGRFLLRLEDTDESRSSGAHAQTLMADLRWMGLHWDEGPEAGGEAGPYHQSERGAVYERYYRALEAADQAYPCFCTERELELSRKAQRAAGKPPRYAGTCAHLTAEERERRRAEGRRPTLRFRVPAEETVVFHDLVRGEQRFPTDEIGDFIIRRADGTAAFFFCNAVDDALMGVSHVLRGEDHLTNTPRQLLLLRALDLPQPEYGHINLITGDDGAPLSKRNGSLSVAELREAGWLPEAVLNYLARLGHHYTGEVESQLLDLQGLADAFRTDALGRAPARFDRHQLSHWQQLAVHRADEATLAPWLERLDDAVPADRRRALLAAVRDNILFPDDLAAWGQRVFGPLPALAPDTEAVIRDAGPAFYEAALAELETTAGDFPALAKAVRKATGAKGRQLFMPLRAALTGLCRGPELGPVYALMPVDIARCRLEQARELAATTP.

Positions 12–22 match the 'HIGH' region motif; sequence PSPTGRMHLGN. Residues Cys109, Cys111, Cys136, and His138 each contribute to the Zn(2+) site. A 'KMSKS' region motif is present at residues 253 to 257; it reads PLSKR. Lys256 lines the ATP pocket.

Belongs to the class-I aminoacyl-tRNA synthetase family. Glutamate--tRNA ligase type 1 subfamily. Monomer. The cofactor is Zn(2+).

It is found in the cytoplasm. It catalyses the reaction tRNA(Glu) + L-glutamate + ATP = L-glutamyl-tRNA(Glu) + AMP + diphosphate. Catalyzes the attachment of glutamate to tRNA(Glu) in a two-step reaction: glutamate is first activated by ATP to form Glu-AMP and then transferred to the acceptor end of tRNA(Glu). This chain is Glutamate--tRNA ligase 2, found in Alkalilimnicola ehrlichii (strain ATCC BAA-1101 / DSM 17681 / MLHE-1).